A 282-amino-acid polypeptide reads, in one-letter code: Cytochrome c1 (282 aa).

The signal sequence occupies residues 1–24 (MTIKLRFVASLALVFGLAAASVPA). The heme c site is built by C62, C65, H66, and M207. Residues 253–273 (WWVLGFLVIFTGLLVATKIVV) form a helical membrane-spanning segment.

As to quaternary structure, the main subunits of complex b-c1 are: cytochrome b, cytochrome c1 and the Rieske protein. Post-translationally, binds 1 heme c group covalently per subunit.

It is found in the cell membrane. Component of the ubiquinol-cytochrome c reductase complex (complex III or cytochrome b-c1 complex), which is a respiratory chain that generates an electrochemical potential coupled to ATP synthesis. c1 functions as an electron donor to cytochrome c. The protein is Cytochrome c1 (petC) of Blastochloris viridis (Rhodopseudomonas viridis).